Reading from the N-terminus, the 119-residue chain is Large ribosomal subunit protein bL20 (119 aa).

It belongs to the bacterial ribosomal protein bL20 family.

Functionally, binds directly to 23S ribosomal RNA and is necessary for the in vitro assembly process of the 50S ribosomal subunit. It is not involved in the protein synthesizing functions of that subunit. This is Large ribosomal subunit protein bL20 from Laribacter hongkongensis (strain HLHK9).